We begin with the raw amino-acid sequence, 225 residues long: Ribonuclease 3 (225 aa).

An RNase III domain is found at 4–133; that stretch reads FEKLETLLGY…LIAAIYLDSN (130 aa). Glu46 serves as a coordination point for Mg(2+). Residue Asp50 is part of the active site. Mg(2+) contacts are provided by Asn119 and Glu122. Residue Glu122 is part of the active site. The 68-residue stretch at 158–225 folds into the DRBM domain; it reads DPKTALQEWA…AARSLLHRLK (68 aa).

Belongs to the ribonuclease III family. Homodimer. It depends on Mg(2+) as a cofactor.

It localises to the cytoplasm. It catalyses the reaction Endonucleolytic cleavage to 5'-phosphomonoester.. Functionally, digests double-stranded RNA. Involved in the processing of primary rRNA transcript to yield the immediate precursors to the large and small rRNAs (23S and 16S). Processes some mRNAs, and tRNAs when they are encoded in the rRNA operon. Processes pre-crRNA and tracrRNA of type II CRISPR loci if present in the organism. The protein is Ribonuclease 3 of Rickettsia prowazekii (strain Madrid E).